We begin with the raw amino-acid sequence, 268 residues long: Zinc transporter ZupT (268 aa).

8 helical membrane passes run 5–25 (ILFAFSLTLLAGLATGIGSII), 38–58 (TVSLGFSAGVMLYVSMIEIFV), 72–92 (AGYIWTVIAFFVGIFVIALID), 124–144 (MGLFSALAIGIHNFPEGLATF), 152–172 (TLGISIAVAIAIHNIPEGLAV), 187–207 (FVLSFLSGLAEPIGAIAGFFL), 211–231 (LFTELTFGLVFASVAGIMVYI), and 248–268 (LAIGGLVGGMLVMAVSLLLFL). Residues Asn136 and Glu139 each contribute to the Fe(2+) site. Residues Glu139 and His164 each coordinate Zn(2+). Fe(2+)-binding residues include Asn165, Glu168, and Glu197. A Zn(2+)-binding site is contributed by Glu168.

Belongs to the ZIP transporter (TC 2.A.5) family. ZupT subfamily.

It localises to the cell inner membrane. It carries out the reaction Zn(2+)(in) = Zn(2+)(out). Its function is as follows. Mediates zinc uptake. May also transport other divalent cations. This Chlorobaculum parvum (strain DSM 263 / NCIMB 8327) (Chlorobium vibrioforme subsp. thiosulfatophilum) protein is Zinc transporter ZupT.